We begin with the raw amino-acid sequence, 462 residues long: B3 domain-containing protein REM8 (462 aa).

DNA-binding regions (TF-B3) lie at residues 11–103, 148–243, and 249–346; these read NKHF…LGPS, CFSQ…LCSR, and FVKL…FSKI. A disordered region spans residues 351–419; sequence FEAEDRRHKR…NLQKTQACSV (69 aa). The span at 369 to 397 shows a compositional bias: basic and acidic residues; that stretch reads ETDKGEPSRATKMGPELEKREKTAEKGEP. Residues 399–418 are compositionally biased toward polar residues; the sequence is RASNKSSGKQGNLQKTQACS.

It is found in the nucleus. The protein is B3 domain-containing protein REM8 (REM8) of Arabidopsis thaliana (Mouse-ear cress).